The following is a 625-amino-acid chain: Transferrin-binding protein B (625 aa).

The first 17 residues, 1 to 17 (MKSVPLISGGLSLFLSA), serve as a signal peptide directing secretion. Residue Cys-18 is the site of N-palmitoyl cysteine attachment. Cys-18 carries S-diacylglycerol cysteine lipidation. 4 disordered regions span residues 25–52 (FDVDDVSNPSSSKPRYQDDTSNQRKKSN), 99–125 (KKENQSQEPTIGSIDEPSETNSPQNHH), 275–298 (VKPTEKDSEEHPFTREGTLEGGFY), and 584–610 (FTYNGKNPTDKNSPTASSPSNSEKARA). The segment covering 276-292 (KPTEKDSEEHPFTREGT) has biased composition (basic and acidic residues). A compositionally biased stretch (polar residues) spans 587–605 (NGKNPTDKNSPTASSPSNS).

This sequence belongs to the TbpB family.

Its subcellular location is the cell outer membrane. It is found in the cell surface. Its function is as follows. Haemophilus acquires iron by extracting it from serum transferrin (TF) in its human host. Acts as a transferrin receptor and is required for transferrin utilization. This Haemophilus influenzae (strain ATCC 51907 / DSM 11121 / KW20 / Rd) protein is Transferrin-binding protein B (tbpB).